The sequence spans 1110 residues: Error-prone DNA polymerase (1110 aa).

The interval 1072 to 1110 (LGELHEPLNDDRREHPDNPAQRIRHPRDVRILPPSRDFH) is disordered. Composition is skewed to basic and acidic residues over residues 1073–1088 (GELH…EHPD) and 1097–1110 (PRDV…RDFH).

The protein belongs to the DNA polymerase type-C family. DnaE2 subfamily.

The protein resides in the cytoplasm. The enzyme catalyses DNA(n) + a 2'-deoxyribonucleoside 5'-triphosphate = DNA(n+1) + diphosphate. Functionally, DNA polymerase involved in damage-induced mutagenesis and translesion synthesis (TLS). It is not the major replicative DNA polymerase. The protein is Error-prone DNA polymerase of Rhodopseudomonas palustris (strain BisB5).